The primary structure comprises 205 residues: Large ribosomal subunit protein uL18 (205 aa).

Belongs to the universal ribosomal protein uL18 family. In terms of assembly, part of the 50S ribosomal subunit. Contacts the 5S and 23S rRNAs.

In terms of biological role, this is one of the proteins that bind and probably mediate the attachment of the 5S RNA into the large ribosomal subunit, where it forms part of the central protuberance. This chain is Large ribosomal subunit protein uL18, found in Pyrobaculum aerophilum (strain ATCC 51768 / DSM 7523 / JCM 9630 / CIP 104966 / NBRC 100827 / IM2).